Reading from the N-terminus, the 124-residue chain is Small ribosomal subunit protein uS13 (124 aa).

The segment at 95–124 is disordered; it reads GLPVRGQRTKTNARTRKGPKRTIAGKKKAR.

It belongs to the universal ribosomal protein uS13 family. Part of the 30S ribosomal subunit. Forms a loose heterodimer with protein S19. Forms two bridges to the 50S subunit in the 70S ribosome.

Located at the top of the head of the 30S subunit, it contacts several helices of the 16S rRNA. In the 70S ribosome it contacts the 23S rRNA (bridge B1a) and protein L5 of the 50S subunit (bridge B1b), connecting the 2 subunits; these bridges are implicated in subunit movement. Contacts the tRNAs in the A and P-sites. This is Small ribosomal subunit protein uS13 from Mycobacterium sp. (strain JLS).